We begin with the raw amino-acid sequence, 457 residues long: Multidrug resistance protein MdtK (457 aa).

The Cytoplasmic segment spans residues 1–10; sequence MQKYISEARL. The helical transmembrane segment at 11–31 threads the bilayer; the sequence is LLALAIPVILAQIAQTAMGFV. Residues 32 to 52 lie on the Periplasmic side of the membrane; the sequence is DTVMAGGYSATDMAAVAIGTS. A helical transmembrane segment spans residues 53 to 73; it reads IWLPAILFGHGLLLALTPVIA. The Cytoplasmic portion of the chain corresponds to 74–92; the sequence is QLNGSGRRERIAHQVRQGF. Residues 93–113 form a helical membrane-spanning segment; the sequence is WLAGFVSVLIMLVLWNAGYII. The Periplasmic portion of the chain corresponds to 114 to 126; it reads RSMENIDPALADK. The helical transmembrane segment at 127–147 threads the bilayer; that stretch reads AVGYLRALLWGAPGYLFFQVA. Residues 148 to 159 are Cytoplasmic-facing; sequence RNQCEGLAKTKP. A helical membrane pass occupies residues 160–180; it reads GMVMGFIGLLVNIPVNYIFIY. Residues 181 to 191 are Periplasmic-facing; the sequence is GHFGMPELSGV. The chain crosses the membrane as a helical span at residues 192–212; it reads GCGVATAAVYWAMFLAMVSYI. Residues 213–242 lie on the Cytoplasmic side of the membrane; that stretch reads KRARSMRDIRNEKGTAKPDPAVMKRLIQLG. A helical membrane pass occupies residues 243-263; that stretch reads LPIALALFFEVTLFAVVALLV. The Periplasmic segment spans residues 264-275; the sequence is SPLGIVDVAGHQ. The helical transmembrane segment at 276–296 threads the bilayer; sequence IALNFSSLMFVLPMSLAAAVT. At 297-313 the chain is on the cytoplasmic side; sequence IRVGYRLGQGSTLDAQT. A helical membrane pass occupies residues 314–334; it reads AARTGLMVGVCMATLTAIFTV. Residues 335-349 lie on the Periplasmic side of the membrane; that stretch reads SLREQIALLYNDNPE. A helical membrane pass occupies residues 350–370; the sequence is VVTLAAHLMLLAAVYQISDSI. The Cytoplasmic portion of the chain corresponds to 371-386; it reads QVIGSGILRGYKDTRS. A helical membrane pass occupies residues 387-407; sequence IFYITFTAYWVLGLPSGYILA. Topologically, residues 408 to 417 are periplasmic; sequence LTDLVVEPMG. The chain crosses the membrane as a helical span at residues 418 to 438; sequence PAGFWIGFIIGLTSAAIMMML. At 439–457 the chain is on the cytoplasmic side; it reads RMRFLQRLPSAIILQRASR.

The protein belongs to the multi antimicrobial extrusion (MATE) (TC 2.A.66.1) family. MdtK subfamily.

The protein localises to the cell inner membrane. In terms of biological role, multidrug efflux pump that functions probably as a Na(+)/drug antiporter. The polypeptide is Multidrug resistance protein MdtK (Shigella dysenteriae serotype 1 (strain Sd197)).